A 303-amino-acid chain; its full sequence is D-alanine--D-alanine ligase (303 aa).

Residues 99–293 (TYRFLKDIVE…FEELVEIILK (195 aa)) enclose the ATP-grasp domain. 125–176 (GYPCVVKPRREGSSIGVFICESDEEFQHALKEDLPRYGSVIVQKYIPGREMT) lines the ATP pocket. D248, E260, and N262 together coordinate Mg(2+).

This sequence belongs to the D-alanine--D-alanine ligase family. It depends on Mg(2+) as a cofactor. Mn(2+) serves as cofactor.

It is found in the cytoplasm. It carries out the reaction 2 D-alanine + ATP = D-alanyl-D-alanine + ADP + phosphate + H(+). It functions in the pathway cell wall biogenesis; peptidoglycan biosynthesis. Cell wall formation. The protein is D-alanine--D-alanine ligase of Thermotoga petrophila (strain ATCC BAA-488 / DSM 13995 / JCM 10881 / RKU-1).